A 122-amino-acid polypeptide reads, in one-letter code: Flagellar protein FliT (122 aa).

A required for homodimerization region spans residues 1–50 (MTSTVEFINRWQRIALLSQSLLELAQRGEWELLLQQEVSYLQSIETVMEK). Residues 60-98 (IQDMVAGYIKQTLDNEQRLKGLLQQRLDELSGLIGQSTR) are fliD binding.

The protein belongs to the FliT family. Homodimer. Interacts with FliD and FlhC.

The protein resides in the cytoplasm. Its subcellular location is the cytosol. Dual-function protein that regulates the transcription of class 2 flagellar operons and that also acts as an export chaperone for the filament-capping protein FliD. As a transcriptional regulator, acts as an anti-FlhDC factor; it directly binds FlhC, thus inhibiting the binding of the FlhC/FlhD complex to class 2 promoters, resulting in decreased expression of class 2 flagellar operons. As a chaperone, effects FliD transition to the membrane by preventing its premature polymerization, and by directing it to the export apparatus. This chain is Flagellar protein FliT, found in Salmonella arizonae (strain ATCC BAA-731 / CDC346-86 / RSK2980).